Reading from the N-terminus, the 403-residue chain is Pyruvate, phosphate dikinase regulatory protein 1, chloroplastic (403 aa).

A chloroplast-targeting transit peptide spans 1–86 (MALLSAMKLQ…NTTGPMRPIE (86 aa)). Positions 1 to 108 (MALLSAMKLQ…DVSSSSNGVS (108 aa)) are disordered. Composition is skewed to low complexity over residues 17–26 (SSNLNPNSKP), 69–80 (STITNGSNNTTG), and 87–108 (SSSR…NGVS). 269–276 (GVSRTGKT) serves as a coordination point for ADP.

This sequence belongs to the pyruvate, phosphate/water dikinase regulatory protein family. PDRP subfamily. As to quaternary structure, interacts with PPDK1. Expressed in green tissues.

The protein resides in the plastid. It localises to the chloroplast stroma. The enzyme catalyses N(tele)-phospho-L-histidyl/L-threonyl-[pyruvate, phosphate dikinase] + ADP = N(tele)-phospho-L-histidyl/O-phospho-L-threonyl-[pyruvate, phosphate dikinase] + AMP + H(+). It catalyses the reaction N(tele)-phospho-L-histidyl/O-phospho-L-threonyl-[pyruvate, phosphate dikinase] + phosphate + H(+) = N(tele)-phospho-L-histidyl/L-threonyl-[pyruvate, phosphate dikinase] + diphosphate. With respect to regulation, regulated by light/dark exposure. Bifunctional serine/threonine kinase and phosphorylase involved in the dark/light-mediated regulation of PPDK by catalyzing its phosphorylation/dephosphorylation. Dark/light-induced changes in stromal concentrations of the competing ADP and Pi substrates govern the direction of the reaction. In the dark, phosphorylates the catalytic intermediate of PPDK (PPDK-HisP), inactivating it. Light exposure induces the phosphorolysis reaction that reactivates PPDK. Unlike the kinase function which can utilize either Thr or Ser as target, the phosphorylase function has a strict substrate requirement for threonyl phosphate. This chain is Pyruvate, phosphate dikinase regulatory protein 1, chloroplastic (RP1), found in Arabidopsis thaliana (Mouse-ear cress).